The chain runs to 227 residues: Potassium/proton antiporter CemA (227 aa).

The next 4 membrane-spanning stretches (helical) occupy residues 5–25 (SISL…SFTF), 112–132 (IICF…LILI), 143–163 (LSDT…IGFH), and 187–207 (IISG…KYWI).

It belongs to the CemA family.

The protein resides in the plastid. It is found in the chloroplast inner membrane. It catalyses the reaction K(+)(in) + H(+)(out) = K(+)(out) + H(+)(in). Contributes to K(+)/H(+) antiport activity by supporting proton efflux to control proton extrusion and homeostasis in chloroplasts in a light-dependent manner to modulate photosynthesis. Prevents excessive induction of non-photochemical quenching (NPQ) under continuous-light conditions. Indirectly promotes efficient inorganic carbon uptake into chloroplasts. This is Potassium/proton antiporter CemA from Phaseolus vulgaris (Kidney bean).